Here is a 611-residue protein sequence, read N- to C-terminus: Lanthanide-dependent methanol dehydrogenase (611 aa).

The signal sequence occupies residues 1-34; that stretch reads MTVKLKKPKKYAVAKNATLLAAFGLIGSLSLAKA. The cysteines at positions 138 and 139 are disulfide-linked. Pyrroloquinoline quinone contacts are provided by Arg144, Thr188, Ser203, Gly204, and Gly205. A Ce(3+)-binding site is contributed by Glu206. Glu206 contributes to the Eu(3+) binding site. Residues Thr270 and Trp272 each contribute to the pyrroloquinoline quinone site. Asn290, Asp333, and Asp335 together coordinate Ce(3+). Asn290, Asp333, and Asp335 together coordinate Eu(3+). Arg360 provides a ligand contact to pyrroloquinoline quinone. Cys414 and Cys443 are oxidised to a cystine. Pyrroloquinoline quinone-binding residues include Trp501 and Trp566.

This sequence belongs to the bacterial PQQ dehydrogenase family. As to quaternary structure, homodimer. Ce(3+) is required as a cofactor. The cofactor is La(3+). Requires Nd(3+) as cofactor. Pr(3+) serves as cofactor. It depends on Eu(3+) as a cofactor. Pyrroloquinoline quinone is required as a cofactor.

It is found in the periplasm. The enzyme catalyses 2 Fe(III)-[cytochrome cL] + methanol = 2 Fe(II)-[cytochrome cL] + formaldehyde + 2 H(+). The catalysed reaction is 4 Fe(III)-[cytochrome cL] + methanol + H2O = 4 Fe(II)-[cytochrome cL] + formate + 5 H(+). It catalyses the reaction 2 Fe(III)-[cytochrome cL] + a primary alcohol = 2 Fe(II)-[cytochrome cL] + an aldehyde + 2 H(+). Its pathway is one-carbon metabolism; methanol degradation. Functionally, catalyzes the oxidation of methanol to formaldehyde or formate in the presence of lanthanides (Ln). Is a key enzyme in methane/methanol metabolism, allowing M.fumariolicum to grow on methane as the sole carbon and energy source. Can also act on other primary alcohols in vitro, such as ethanol, 1-propanol, 1-butanol, and 1-hexanol, but is not able to oxidize secondary alcohols and acetaldehyde. Uses a specific cytochrome cL, encoded by the adjacent gene in the locus, as electron acceptor. This Methylacidiphilum fumariolicum (strain SolV) protein is Lanthanide-dependent methanol dehydrogenase.